A 298-amino-acid polypeptide reads, in one-letter code: Glutamyl-Q tRNA(Asp) synthetase (298 aa).

L-glutamate contacts are provided by residues 9-13 and Glu45; that span reads RFAPS. A 'HIGH' region motif is present at residues 12–22; the sequence is PSPSGELHFGS. Residues Cys101, Cys103, Tyr115, and Cys119 each coordinate Zn(2+). Positions 172 and 190 each coordinate L-glutamate. The 'KMSKS' region signature appears at 228–232; it reads KLSKQ. Lys231 contributes to the ATP binding site.

The protein belongs to the class-I aminoacyl-tRNA synthetase family. GluQ subfamily. Requires Zn(2+) as cofactor.

Its function is as follows. Catalyzes the tRNA-independent activation of glutamate in presence of ATP and the subsequent transfer of glutamate onto a tRNA(Asp). Glutamate is transferred on the 2-amino-5-(4,5-dihydroxy-2-cyclopenten-1-yl) moiety of the queuosine in the wobble position of the QUC anticodon. The protein is Glutamyl-Q tRNA(Asp) synthetase of Cronobacter sakazakii (strain ATCC BAA-894) (Enterobacter sakazakii).